A 706-amino-acid chain; its full sequence is MQISLKWIKELIDIENVDLDDLIEKLTLGGFEVEEILELEINNEKQIALEISSTANRSDSLSIQGISVEIASLFNKQPKVCKYFNSSLNWQQKIKNLTTIRTSKTECLMFTAVILEGLEDLTVPKWIQNKLVSSGIMPLNNLVDFQNYILLETGYPFAFYDLDKVYSKVRTPTFSLSIEKAENGSEFFASNQINYKLDNSIFLVQANNIPISIAGIIENDEIICHSKTSSLLIEGSIFSASKIRQQSRKLAIRTDRSARYEKSLKSTYLIEALYRLISLLRISNPSLVYKFHSSNKVLEKVLKPIVLNYKTIVEILGPIKKRTNEHLIYISPETVTDYLKRLNFKFLFDSSTLNWEVTIPSIRSDDITREIDLIEEVGRLHGFNNFLTMLPQIKSVGRADFSYQTRKKITSYLLNMGLTELIHYSLVSNETFLKNEIKLVNPLLSDCSTLRVSLLPSLLMTIQENLKQGNSILEGFEYGHVFSGNIETTLTEIEYVGGIFGGTKIKSSWFEKGQSLKWFEAKGKIEKLFQQLNLGIHWRINSQTYTKKFLHPYRSAEIFLSSGKNIGVFGQLHPLLANKLGLSSEIYLFELNLELIQQSLQQNKLTIYSQYSVYPKIVKDLSFIIKKNIKFDELEKIIYANGTEFLSQINLLDDYKGEFIPEKHTSLCLQLTFQSNKKTLENKEIDRIVKNLKRVLELKVQAILRE.

Residues 300–388 (KVLKPIVLNY…RLHGFNNFLT (89 aa)) form the B5 domain. Mg(2+) is bound by residues aspartate 366, aspartate 372, glutamate 375, and glutamate 376. Residues 612–705 (SVYPKIVKDL…LELKVQAILR (94 aa)) enclose the FDX-ACB domain.

The protein belongs to the phenylalanyl-tRNA synthetase beta subunit family. Type 1 subfamily. As to quaternary structure, tetramer of two alpha and two beta subunits. It depends on Mg(2+) as a cofactor.

It localises to the plastid. The protein resides in the chloroplast. The enzyme catalyses tRNA(Phe) + L-phenylalanine + ATP = L-phenylalanyl-tRNA(Phe) + AMP + diphosphate + H(+). The chain is Phenylalanine--tRNA ligase beta subunit, chloroplastic from Phaeodactylum tricornutum (strain CCAP 1055/1).